The primary structure comprises 141 residues: Hemoglobin subunit alpha-1 (141 aa).

A Globin domain is found at 1-141 (VLSAADKGNV…VSTVLTSKYR (141 aa)). Histidine 58 is a binding site for O2. Histidine 87 provides a ligand contact to heme b.

It belongs to the globin family. Heterotetramer of two alpha chains and two beta chains. Red blood cells.

Its function is as follows. Involved in oxygen transport from the lung to the various peripheral tissues. The sequence is that of Hemoglobin subunit alpha-1 from Bos mutus grunniens (Wild yak).